A 169-amino-acid polypeptide reads, in one-letter code: uncharacterized protein (169 aa).

Over residues 144–157 the composition is skewed to low complexity; the sequence is AEAHSASPASSDSS. The tract at residues 144–169 is disordered; that stretch reads AEAHSASPASSDSSPLTNNIRPISIM. Residues 158 to 169 are compositionally biased toward polar residues; that stretch reads PLTNNIRPISIM.

This is an uncharacterized protein from Saccharomyces cerevisiae (strain ATCC 204508 / S288c) (Baker's yeast).